Consider the following 324-residue polypeptide: HSF-like protein (324 aa).

The first 19 residues, 1 to 19, serve as a signal peptide directing secretion; that stretch reads MNSLVALVLLGQIIGSTVS. 2 Cystatin fetuin-A-type domains span residues 21-130 and 141-254; these read QLGP…VKCS and RDCP…SDCV. Intrachain disulfides connect C28–C315, C85–C96, C110–C129, C143–C146, C205–C217, and C230–C253. N95 is a glycosylation site (N-linked (GlcNAc...) asparagine). N204 is a glycosylation site (N-linked (GlcNAc...) asparagine). Residue N282 is glycosylated (N-linked (GlcNAc...) asparagine).

This sequence belongs to the fetuin family. Homodimer. As to expression, expressed by the liver.

Its subcellular location is the secreted. May not have antihemorrhagic activity. This chain is HSF-like protein, found in Protobothrops flavoviridis (Habu).